The chain runs to 478 residues: MGCSWRKTLSFFLVFVPIYLHGASSQEAAPVGPRKPFFERLRRLEEQFRRFQEVTWTHLQNIASNYNVSYNVDVRFRSLAEESQAVAQAVNRSQASVQGELAQLKAWVRKLQRRGRKVDTRLRALDLTLGERSQQRARERKAHKAQRDALQDSLARLEGLVHSQGARLAALEGRLPVAHPGTAALGPALVPTPTQPEELGPTSLKLQRDRQELRAASEHRGPPQDSSAPLQGRREPPASGSHRVLSGTAPKDPRQQAWSPQVPGEICGVGPTLVFPNASTRNVVFLSPGFVTALRALSFCSWVRTASGRLGTLLSYATEDNDNKLVLHGRDSLLPGSIHFVIGDPAFRELPLQLLLDGQWHHICVIWTSTQGRYWLHVDRRLVATGSRFREGYEIPPGGSLVLGQEQDSVGGGFDSSEAFVGSMSGLAIWDRALVPGEVANLAIGKEFPTGAILTLANAALAGGFVQGANCTCLERCP.

The first 25 residues, 1–25 (MGCSWRKTLSFFLVFVPIYLHGASS), serve as a signal peptide directing secretion. N-linked (GlcNAc...) asparagine glycosylation is found at asparagine 67 and asparagine 91. The segment covering 208-222 (RDRQELRAASEHRGP) has biased composition (basic and acidic residues). The segment at 208–262 (RDRQELRAASEHRGPPQDSSAPLQGRREPPASGSHRVLSGTAPKDPRQQAWSPQV) is disordered. The Pentraxin (PTX) domain maps to 269–473 (VGPTLVFPNA…GFVQGANCTC (205 aa)). Cysteine 300 and cysteine 364 form a disulfide bridge. Positions 322, 323, 406, 407, and 408 each coordinate Ca(2+).

It depends on Ca(2+) as a cofactor. Widely expressed at low levels with highest levels in small intestine, testis and brain. Very low expression in endothelial cells, monocytes, neutrophils and lymphocytes. Isoform 1 is not expressed in small intestine.

The protein localises to the secreted. The sequence is that of Pentraxin-4 (PTX4) from Homo sapiens (Human).